We begin with the raw amino-acid sequence, 248 residues long: Transcription factor cicD (248 aa).

Positions 1–22 (MVGSRHPDQCAKRWHHSLDPNV) are enriched in basic and acidic residues. A disordered region spans residues 1–25 (MVGSRHPDQCAKRWHHSLDPNVKRG). The HTH myb-type domain occupies 19 to 74 (DPNVKRGPWTMEEDSSLLEAVQKIGRDWKEIGRELFPSRSTTDIKNRYVILSRRRG). Residues 46-70 (WKEIGRELFPSRSTTDIKNRYVILS) constitute a DNA-binding region (H-T-H motif). A disordered region spans residues 186–208 (SELEGSFTSRNHEEPPQPLPVPD).

It localises to the nucleus. Transcription factor that regulates the expression of the gene cluster that mediates the biosynthesis of cichorine, a phytotoxin active against knapweed, corn, and soybeans. The polypeptide is Transcription factor cicD (Emericella nidulans (strain FGSC A4 / ATCC 38163 / CBS 112.46 / NRRL 194 / M139) (Aspergillus nidulans)).